A 107-amino-acid polypeptide reads, in one-letter code: Ferredoxin Fdx8 (107 aa).

2 consecutive 4Fe-4S ferredoxin-type domains span residues 1-31 and 50-79; these read MAYV…GPLA and LQLY…DEDE. Cysteine 9, cysteine 13, cysteine 17, cysteine 21, cysteine 59, cysteine 62, cysteine 65, and cysteine 69 together coordinate [4Fe-4S] cluster.

Requires [4Fe-4S] cluster as cofactor.

Functionally, ferredoxins are iron-sulfur proteins that transfer electrons in a wide variety of metabolic reactions. Fdx2 can receive electrons from both FdR_A and FdR_B ferredoxin reductases, with a preference for FdR_B compared with FdR_A, and transfer the electrons to the cytochrome P450 CYP260A1. The chain is Ferredoxin Fdx8 from Sorangium cellulosum (strain So ce56) (Polyangium cellulosum (strain So ce56)).